The chain runs to 203 residues: Urease accessory protein UreG (203 aa).

14 to 21 contributes to the GTP binding site; the sequence is GPVGSGKT.

The protein belongs to the SIMIBI class G3E GTPase family. UreG subfamily. As to quaternary structure, homodimer. UreD, UreF and UreG form a complex that acts as a GTP-hydrolysis-dependent molecular chaperone, activating the urease apoprotein by helping to assemble the nickel containing metallocenter of UreC. The UreE protein probably delivers the nickel.

The protein localises to the cytoplasm. In terms of biological role, facilitates the functional incorporation of the urease nickel metallocenter. This process requires GTP hydrolysis, probably effectuated by UreG. This Rhizobium meliloti (strain 1021) (Ensifer meliloti) protein is Urease accessory protein UreG.